A 122-amino-acid chain; its full sequence is Holo-[acyl-carrier-protein] synthase (122 aa).

The Mg(2+) site is built by Asp8 and Glu56.

This sequence belongs to the P-Pant transferase superfamily. AcpS family. Requires Mg(2+) as cofactor.

The protein resides in the cytoplasm. It carries out the reaction apo-[ACP] + CoA = holo-[ACP] + adenosine 3',5'-bisphosphate + H(+). Its function is as follows. Transfers the 4'-phosphopantetheine moiety from coenzyme A to a Ser of acyl-carrier-protein. The sequence is that of Holo-[acyl-carrier-protein] synthase from Alkaliphilus oremlandii (strain OhILAs) (Clostridium oremlandii (strain OhILAs)).